Consider the following 626-residue polypeptide: Janus kinase and microtubule-interacting protein 1 (626 aa).

Residues Met1–Ala22 form a disordered region. Residues Met1–Val365 form a mediates association with microtubules region. Coiled coils occupy residues Val19–Arg255 and Glu284–Ser413. The tract at residues Val365–Met626 is mediates interaction with TYK2 and GABBR1. Ser382 is modified (phosphoserine). Polar residues predominate over residues Glu452 to Thr461. The tract at residues Glu452 to Asp477 is disordered. At Thr470 the chain carries Phosphothreonine. A coiled-coil region spans residues Gln490–Arg604.

It belongs to the JAKMIP family. Homodimer. Forms a complex with GABBR1 and KIF5B/kinesin-1. Interacts with JAK1 and TYK2. As to expression, predominantly expressed in neural tissues and lymphoid cells (at protein level). Isoform 2, isoform 3 and isoform 4 are specifically expressed in brain and retina. Isoform 1 and isoform 5 are also detected in liver, lung and skeletal muscle. Also detected in testis and to a lower extent spleen and intestine.

The protein localises to the cytoplasm. Its subcellular location is the cytoskeleton. The protein resides in the membrane. In terms of biological role, associates with microtubules and may play a role in the microtubule-dependent transport of the GABA-B receptor. May play a role in JAK1 signaling and regulate microtubule cytoskeleton rearrangements. The sequence is that of Janus kinase and microtubule-interacting protein 1 (JAKMIP1) from Homo sapiens (Human).